The sequence spans 899 residues: Valine--tRNA ligase (899 aa).

Positions 60-70 (PNVTGVLHMGH) match the 'HIGH' region motif. The 'KMSKS' region signature appears at 539–543 (KMSKS). Lys-542 contacts ATP. The stretch at 827-898 (AGLIDLDEEQ…KQGLEKLAAL (72 aa)) forms a coiled coil.

Belongs to the class-I aminoacyl-tRNA synthetase family. ValS type 1 subfamily. In terms of assembly, monomer.

It localises to the cytoplasm. The catalysed reaction is tRNA(Val) + L-valine + ATP = L-valyl-tRNA(Val) + AMP + diphosphate. Catalyzes the attachment of valine to tRNA(Val). As ValRS can inadvertently accommodate and process structurally similar amino acids such as threonine, to avoid such errors, it has a 'posttransfer' editing activity that hydrolyzes mischarged Thr-tRNA(Val) in a tRNA-dependent manner. The chain is Valine--tRNA ligase from Syntrophotalea carbinolica (strain DSM 2380 / NBRC 103641 / GraBd1) (Pelobacter carbinolicus).